The sequence spans 311 residues: Phosphoribosylamine--glycine ligase (311 aa).

The ATP-grasp domain occupies 1–191; the sequence is DPRVRKQYIQ…LVQVLLAACR (191 aa).

It belongs to the GARS family.

It is found in the plastid. It localises to the chloroplast. It carries out the reaction 5-phospho-beta-D-ribosylamine + glycine + ATP = N(1)-(5-phospho-beta-D-ribosyl)glycinamide + ADP + phosphate + H(+). The protein operates within purine metabolism; IMP biosynthesis via de novo pathway; N(1)-(5-phospho-D-ribosyl)glycinamide from 5-phospho-alpha-D-ribose 1-diphosphate: step 2/2. In Vigna unguiculata (Cowpea), this protein is Phosphoribosylamine--glycine ligase (PUR2).